Reading from the N-terminus, the 332-residue chain is 2,3-diketo-L-gulonate reductase (332 aa).

His44 acts as the Proton donor in catalysis. Residues 168–174 (ITMVDMS), 224–225 (WK), and 304–306 (GHE) each bind NAD(+).

The protein belongs to the LDH2/MDH2 oxidoreductase family. DlgD subfamily. As to quaternary structure, homodimer.

It localises to the cytoplasm. It catalyses the reaction 3-dehydro-L-gulonate + NAD(+) = 2,3-dioxo-L-gulonate + NADH + H(+). The catalysed reaction is 3-dehydro-L-gulonate + NADP(+) = 2,3-dioxo-L-gulonate + NADPH + H(+). Functionally, catalyzes the reduction of 2,3-diketo-L-gulonate in the presence of NADH, to form 3-keto-L-gulonate. This chain is 2,3-diketo-L-gulonate reductase, found in Escherichia coli O17:K52:H18 (strain UMN026 / ExPEC).